Consider the following 240-residue polypeptide: 2-C-methyl-D-erythritol 2,4-cyclodiphosphate synthase, apicoplast (240 aa).

The a divalent metal cation site is built by Asp71 and His73. Residues Asp71 to His73 and His115 to Ser116 contribute to the 4-CDP-2-C-methyl-D-erythritol 2-phosphate site. A divalent metal cation is bound at residue His123. Residues Asp137–Gly139, Phe142–Asp146, Ala181–Ser187, and Gly212–Thr214 contribute to the 4-CDP-2-C-methyl-D-erythritol 2-phosphate site.

It belongs to the IspF family. As to quaternary structure, homotrimer. Requires a divalent metal cation as cofactor.

Its subcellular location is the plastid. It is found in the apicoplast. It carries out the reaction 4-CDP-2-C-methyl-D-erythritol 2-phosphate = 2-C-methyl-D-erythritol 2,4-cyclic diphosphate + CMP. The protein operates within isoprenoid biosynthesis; isopentenyl diphosphate biosynthesis via DXP pathway; isopentenyl diphosphate from 1-deoxy-D-xylulose 5-phosphate: step 4/6. Functionally, in the mevalonate-independent isoprenoid biosynthetic pathway, converts 4-diphosphocytidyl-2C-methyl-D-erythritol 2-phosphate into 2C-methyl-D-erythritol 2,4-cyclodiphosphate and CMP. The polypeptide is 2-C-methyl-D-erythritol 2,4-cyclodiphosphate synthase, apicoplast (Plasmodium falciparum (isolate 3D7)).